The following is a 630-amino-acid chain: Mitochondrial Rho GTPase 1 (630 aa).

Positions 1–168 (MKEVRVVICG…FYMCRACVIY (168 aa)) constitute a Miro 1 domain. Residues 1-598 (MKEVRVVICG…EEDSNKTNYQ (598 aa)) lie on the Cytoplasmic side of the membrane. GTP is bound by residues 10–17 (GDQGVGKS), 57–61 (DTQSD), and 113–116 (NKSE). 2 EF-hand domains span residues 184 to 219 (ATIH…CFSK) and 304 to 339 (KGYR…TPGL). D197, N199, D201, E208, D317, D319, D321, and E328 together coordinate Ca(2+). A Miro 2 domain is found at 419-579 (RNVFLCFVVG…FIQLAESAQY (161 aa)). Residues 428–435 (GSKSCGKT), 459–463 (EFQST), and 527–530 (TKAD) each bind GTP. A helical; Anchor for type IV membrane protein membrane pass occupies residues 599–619 (LVAALTAFGALLLSVGGSLTW). Topologically, residues 620–630 (KIIKHQYYSKK) are mitochondrial intermembrane.

It belongs to the mitochondrial Rho GTPase family.

The protein localises to the mitochondrion outer membrane. In terms of biological role, mitochondrial GTPase involved in mitochondrial trafficking. Probably involved in control of anterograde transport of mitochondria and their subcellular distribution. This chain is Mitochondrial Rho GTPase 1 (gem1), found in Schizosaccharomyces pombe (strain 972 / ATCC 24843) (Fission yeast).